Here is a 314-residue protein sequence, read N- to C-terminus: Polyamine aminopropyltransferase (314 aa).

A PABS domain is found at 4–241 (GMYFFEHVTP…LNFGFLLASD (238 aa)). Glutamine 33 contributes to the S-methyl-5'-thioadenosine binding site. Residues histidine 64 and glutamate 88 each coordinate spermidine. Residues aspartate 108 and 140–141 (DA) contribute to the S-methyl-5'-thioadenosine site. Aspartate 158 functions as the Proton acceptor in the catalytic mechanism. Proline 168 contributes to the S-methyl-5'-thioadenosine binding site.

This sequence belongs to the spermidine/spermine synthase family. In terms of assembly, homodimer or homotetramer.

It is found in the cytoplasm. It catalyses the reaction S-adenosyl 3-(methylsulfanyl)propylamine + putrescine = S-methyl-5'-thioadenosine + spermidine + H(+). It participates in amine and polyamine biosynthesis; spermidine biosynthesis; spermidine from putrescine: step 1/1. Catalyzes the irreversible transfer of a propylamine group from the amino donor S-adenosylmethioninamine (decarboxy-AdoMet) to putrescine (1,4-diaminobutane) to yield spermidine. In Thermus thermophilus (strain ATCC BAA-163 / DSM 7039 / HB27), this protein is Polyamine aminopropyltransferase.